Reading from the N-terminus, the 399-residue chain is Peroxisome assembly protein 12 (399 aa).

The segment at M1–G24 is disordered. The Peroxisomal matrix segment spans residues M1–T33. Residues S9 to G24 are compositionally biased toward low complexity. A helical transmembrane segment spans residues I34 to N62. Over F63 to Y67 the chain is Cytoplasmic. The chain crosses the membrane as a helical span at residues T68 to K92. The Peroxisomal matrix portion of the chain corresponds to T93–N136. A helical membrane pass occupies residues Q137–N168. Residues I169 to S171 lie on the Cytoplasmic side of the membrane. A helical transmembrane segment spans residues S172–T208. Topologically, residues K209–Q277 are peroxisomal matrix. A helical membrane pass occupies residues F278 to V305. Residues N306–I399 lie on the Cytoplasmic side of the membrane. Zn(2+) is bound by residues C334, C337, C354, and C357. The segment at C334–N373 adopts an RING-type; degenerate zinc-finger fold.

This sequence belongs to the pex2/pex10/pex12 family. In terms of assembly, component of the PEX2-PEX10-PEX12 retrotranslocation channel, composed of PEX2, PEX10 and PEX12.

Its subcellular location is the peroxisome membrane. The protein operates within protein modification; protein ubiquitination. Functionally, component of a retrotranslocation channel required for peroxisome organization by mediating export of the PEX5 receptor from peroxisomes to the cytosol, thereby promoting PEX5 recycling. The retrotranslocation channel is composed of PEX2, PEX10 and PEX12; each subunit contributing transmembrane segments that coassemble into an open channel that specifically allows the passage of PEX5 through the peroxisomal membrane. PEX12 also regulates PEX5 recycling by activating the E3 ubiquitin-protein ligase activity of PEX10. When PEX5 recycling is compromised, PEX12 stimulates PEX10-mediated polyubiquitination of PEX5, leading to its subsequent degradation. In Saccharomyces cerevisiae (strain ATCC 204508 / S288c) (Baker's yeast), this protein is Peroxisome assembly protein 12.